The following is a 399-amino-acid chain: Nicotinate phosphoribosyltransferase (399 aa).

H217 is subject to Phosphohistidine; by autocatalysis.

The protein belongs to the NAPRTase family. Transiently phosphorylated on a His residue during the reaction cycle. Phosphorylation strongly increases the affinity for substrates and increases the rate of nicotinate D-ribonucleotide production. Dephosphorylation regenerates the low-affinity form of the enzyme, leading to product release.

The catalysed reaction is nicotinate + 5-phospho-alpha-D-ribose 1-diphosphate + ATP + H2O = nicotinate beta-D-ribonucleotide + ADP + phosphate + diphosphate. The protein operates within cofactor biosynthesis; NAD(+) biosynthesis; nicotinate D-ribonucleotide from nicotinate: step 1/1. Catalyzes the synthesis of beta-nicotinate D-ribonucleotide from nicotinate and 5-phospho-D-ribose 1-phosphate at the expense of ATP. This Burkholderia cenocepacia (strain HI2424) protein is Nicotinate phosphoribosyltransferase.